Here is a 273-residue protein sequence, read N- to C-terminus: Undecaprenyl-diphosphatase (273 aa).

Helical transmembrane passes span 46-63, 83-103, 109-129, 184-204, 218-238, and 249-269; these read LFEV…CWEY, FVLN…LAGK, LFNS…ILWV, ATEF…AYDL, AFGI…RGLL, and FAWY…YGLV.

The protein belongs to the UppP family.

The protein resides in the cell inner membrane. It catalyses the reaction di-trans,octa-cis-undecaprenyl diphosphate + H2O = di-trans,octa-cis-undecaprenyl phosphate + phosphate + H(+). Catalyzes the dephosphorylation of undecaprenyl diphosphate (UPP). Confers resistance to bacitracin. The sequence is that of Undecaprenyl-diphosphatase from Methylococcus capsulatus (strain ATCC 33009 / NCIMB 11132 / Bath).